Reading from the N-terminus, the 563-residue chain is Tripeptidyl-peptidase 1 (563 aa).

The first 19 residues, Met-1–Cys-19, serve as a signal peptide directing secretion. A propeptide spans Ser-20–Gly-195 (removed in mature form). Cys-111 and Cys-122 are joined by a disulfide. Residues Gly-199 to Pro-563 enclose the Peptidase S53 domain. N-linked (GlcNAc...) asparagine glycosylation is found at Asn-210 and Asn-222. Residues Glu-272 and Asp-276 each act as charge relay system in the active site. N-linked (GlcNAc...) asparagine glycans are attached at residues Asn-286, Asn-313, and Asn-443. 2 cysteine pairs are disulfide-bonded: Cys-365-Cys-526 and Cys-522-Cys-537. Ser-475 (charge relay system) is an active-site residue. Asp-517 and Val-518 together coordinate Ca(2+). Residues Gly-539, Gly-541, and Asp-543 each contribute to the Ca(2+) site.

As to quaternary structure, monomer. Interacts with CLN5. Interacts with CLN3. Ca(2+) is required as a cofactor. In terms of processing, activated by autocatalytic proteolytical processing upon acidification. N-glycosylation is required for processing and activity.

The protein resides in the lysosome. It localises to the melanosome. The catalysed reaction is Release of an N-terminal tripeptide from a polypeptide, but also has endopeptidase activity.. Functionally, lysosomal serine protease with tripeptidyl-peptidase I activity. May act as a non-specific lysosomal peptidase which generates tripeptides from the breakdown products produced by lysosomal proteinases. Requires substrates with an unsubstituted N-terminus. This Canis lupus familiaris (Dog) protein is Tripeptidyl-peptidase 1 (TPP1).